Here is a 630-residue protein sequence, read N- to C-terminus: Protein mono-ADP-ribosyltransferase PARP6 (630 aa).

An ADP-ribosylcysteine modification is found at C237. Positions 394 to 620 (EMTQGSYLEI…QDPKIQKEIM (227 aa)) constitute a PARP catalytic domain. D600 bears the ADP-ribosyl aspartic acid mark.

Belongs to the ARTD/PARP family. Post-translationally, auto-mono-ADP-ribosylated.

The catalysed reaction is L-aspartyl-[protein] + NAD(+) = 4-O-(ADP-D-ribosyl)-L-aspartyl-[protein] + nicotinamide. The enzyme catalyses L-cysteinyl-[protein] + NAD(+) = S-(ADP-D-ribosyl)-L-cysteinyl-[protein] + nicotinamide + H(+). Its function is as follows. Mono-ADP-ribosyltransferase that mediates mono-ADP-ribosylation of target proteins. The sequence is that of Protein mono-ADP-ribosyltransferase PARP6 from Mus musculus (Mouse).